The primary structure comprises 728 residues: Rho-related BTB domain-containing protein 2 (728 aa).

The segment at 1–210 is rho-like; it reads MDSDMDYERP…DNAIRAALIS (210 aa). GTP contacts are provided by residues 21 to 28, 84 to 88, and 140 to 143; these read GDNAVGKT, DTFGD, and CQLD. BTB domains follow at residues 266–333 and 500–567; these read ADVI…HHHH and SDVT…TSSP. The span at 304–313 shows a compositional bias: gly residues; that stretch reads ELGGPSGSGG. The tract at residues 304-333 is disordered; the sequence is ELGGPSGSGGPRPEDHRSHPEQHHHHHHHH. Over residues 315-324 the composition is skewed to basic and acidic residues; sequence RPEDHRSHPE. Residues 703-728 are disordered; sequence FWNSPSSPSSSAAGSASPSSSSSAVV. Low complexity predominate over residues 706 to 728; the sequence is SPSSPSSSAAGSASPSSSSSAVV.

This sequence belongs to the small GTPase superfamily. Rho family. As to quaternary structure, interacts with HSP90AA1 and HSP90AB1. Forms a complex with CUL3 and RBX1. Interacts (via BTB 1 domain) with CUL3. Interacts with MSI2. Post-translationally, autoubiquitinated by RHOBTB2-CUL3-RBX1 ubiquitin ligase complex. In terms of tissue distribution, expressed in most tissues, with highest expression in brain.

Its function is as follows. Regulator of cell proliferation and apoptosis. It likely functions as a substrate-adapter that recruits key substrates, e.g. MSI2, to CUL3-based ubiquitin ligase complexes for degradation. Required for MSI2 ubiquitination and degradation. The chain is Rho-related BTB domain-containing protein 2 (Rhobtb2) from Mus musculus (Mouse).